We begin with the raw amino-acid sequence, 862 residues long: Rho guanine nucleotide exchange factor 7 (862 aa).

The region spanning 1 to 112 (MNSAEQTVTW…SLVTLNKVTA (112 aa)) is the Calponin-homology (CH) domain. Ser132, Ser155, Ser164, Ser228, and Ser236 each carry phosphoserine. Positions 163-222 (NSQLVVRAKFNFQQTNEDELSFSKGDVIHVTRVEEGGWWEGTHNGRTGWFPSNYVREIKP) constitute an SH3 domain. Positions 250–430 (YYNVVLQNIL…KNLSAQCQEV (181 aa)) constitute a DH domain. Residues 452 to 557 (DIKTLGSVTY…WVEHLQKQTK (106 aa)) enclose the PH domain. Ser497 bears the Phosphoserine mark. Disordered regions lie at residues 559 to 591 (TSVSNPTIKPHSVPSHTLPSHPLTPSSKHADSK), 657 to 679 (KTMKKLLPKRKPERKPSDEEFAV), and 728 to 748 (DQSSLDSLGRRSSLSRLEPSD). Residues 572 to 585 (PSHTLPSHPLTPSS) show a composition bias toward polar residues. Residues 657–669 (KTMKKLLPKRKPE) are compositionally biased toward basic residues. The segment covering 670-679 (RKPSDEEFAV) has biased composition (basic and acidic residues). The residue at position 673 (Ser673) is a Phosphoserine. Residues 731-744 (SLDSLGRRSSLSRL) are compositionally biased toward low complexity. Ser776 bears the Phosphoserine mark. The stretch at 804–854 (KSLVDTVYALKDEVQELRQDNKKMKKSLEEEQRARKDLEKLVRKVLKNMND) forms a coiled coil.

Interacts with PAK kinases through the SH3 domain. Interacts with unphosphorylated PAK1. Interacts with ITCH. Interacts with SCRIB; interaction is direct and may play a role in regulation of apoptosis. Interacts with GIT1 and TGFB1I1. Interacts with FRMPD4 (via N-terminus). Interacts with CaMK1. Interacts with BIN2. Interacts with PTK2/FAK1 and RAC1. Interacts with PARVB. Interacts with YWHAZ. Interacts (via PH domain) with NOX1 (via FAD-binding FR-type domain). Phosphorylated on Ser-673 by CaMK1; enhancement of GEF activity and downstream activation of RAC1. Phosphorylated by PTK2/FAK1; this promotes interaction with RAC1. Seems to be expressed in the central nervous system. Isoform B, isoform C and isoform E are expressed with highest levels in brain and testis.

The protein resides in the cell junction. Its subcellular location is the focal adhesion. The protein localises to the cell projection. It localises to the ruffle. It is found in the cytoplasm. The protein resides in the cell cortex. Its subcellular location is the lamellipodium. Acts as a RAC1 guanine nucleotide exchange factor (GEF) and can induce membrane ruffling. May function as a positive regulator of apoptosis. Functions in cell migration, attachment and cell spreading. Promotes targeting of RAC1 to focal adhesions. Downstream of NMDA receptors and CaMKK-CaMK1 signaling cascade, promotes the formation of spines and synapses in hippocampal neurons. This Mus musculus (Mouse) protein is Rho guanine nucleotide exchange factor 7 (Arhgef7).